Here is a 426-residue protein sequence, read N- to C-terminus: Serine--tRNA ligase (426 aa).

232–234 is an L-serine binding site; that stretch reads TAE. 263 to 265 lines the ATP pocket; that stretch reads RSE. An L-serine-binding site is contributed by Glu286. ATP is bound at residue 350 to 353; the sequence is EISS. Ser385 serves as a coordination point for L-serine.

It belongs to the class-II aminoacyl-tRNA synthetase family. Type-1 seryl-tRNA synthetase subfamily. In terms of assembly, homodimer. The tRNA molecule binds across the dimer.

It localises to the cytoplasm. The catalysed reaction is tRNA(Ser) + L-serine + ATP = L-seryl-tRNA(Ser) + AMP + diphosphate + H(+). The enzyme catalyses tRNA(Sec) + L-serine + ATP = L-seryl-tRNA(Sec) + AMP + diphosphate + H(+). It functions in the pathway aminoacyl-tRNA biosynthesis; selenocysteinyl-tRNA(Sec) biosynthesis; L-seryl-tRNA(Sec) from L-serine and tRNA(Sec): step 1/1. Its function is as follows. Catalyzes the attachment of serine to tRNA(Ser). Is also able to aminoacylate tRNA(Sec) with serine, to form the misacylated tRNA L-seryl-tRNA(Sec), which will be further converted into selenocysteinyl-tRNA(Sec). This chain is Serine--tRNA ligase, found in Pediococcus pentosaceus (strain ATCC 25745 / CCUG 21536 / LMG 10740 / 183-1w).